We begin with the raw amino-acid sequence, 462 residues long: Hyaluronidase-1 (462 aa).

A signal peptide spans 1–52 (MLGLTQHAQKVWRMKPFSPEVSPGSSPATAGHLLRISTLFLTLLELAQVCRG). Intrachain disulfides connect Cys71-Cys361 and Cys235-Cys249. Asn98 and Asn127 each carry an N-linked (GlcNAc...) asparagine glycan. Glu159 serves as the catalytic Proton donor. 3 N-linked (GlcNAc...) asparagine glycosylation sites follow: Asn244, Asn265, and Asn378. 3 disulfides stabilise this stretch: Cys386-Cys397, Cys391-Cys446, and Cys448-Cys457. The EGF-like domain occupies 446–457 (CRCYRGWRGKWC).

This sequence belongs to the glycosyl hydrolase 56 family. Highly expressed in liver, kidney, lung and skin.

The protein resides in the secreted. The protein localises to the lysosome. The enzyme catalyses Random hydrolysis of (1-&gt;4)-linkages between N-acetyl-beta-D-glucosamine and D-glucuronate residues in hyaluronate.. Its function is as follows. May have a role in promoting tumor progression. May block the TGFB1-enhanced cell growth. The chain is Hyaluronidase-1 (Hyal1) from Mus musculus (Mouse).